A 300-amino-acid chain; its full sequence is Tyrosine recombinase XerC (300 aa).

The Core-binding (CB) domain occupies 2 to 88 (TQEGKLEQQF…SLRSFYTFLL (87 aa)). Residues 109-294 (RLPKFFYSEE…TKEHLKSTYM (186 aa)) enclose the Tyr recombinase domain. Catalysis depends on residues Arg150, Lys174, His246, Arg249, and His272. The active-site O-(3'-phospho-DNA)-tyrosine intermediate is Tyr281.

It belongs to the 'phage' integrase family. XerC subfamily. Forms a cyclic heterotetrameric complex composed of two molecules of XerC and two molecules of XerD.

It is found in the cytoplasm. Functionally, site-specific tyrosine recombinase, which acts by catalyzing the cutting and rejoining of the recombining DNA molecules. The XerC-XerD complex is essential to convert dimers of the bacterial chromosome into monomers to permit their segregation at cell division. It also contributes to the segregational stability of plasmids. The sequence is that of Tyrosine recombinase XerC from Listeria welshimeri serovar 6b (strain ATCC 35897 / DSM 20650 / CCUG 15529 / CIP 8149 / NCTC 11857 / SLCC 5334 / V8).